The primary structure comprises 306 residues: Nucleotide-binding protein MUL_1815 (306 aa).

Residue 29-36 participates in ATP binding; it reads GLSGAGRG. 80–83 lines the GTP pocket; it reads DVRS.

Belongs to the RapZ-like family.

In terms of biological role, displays ATPase and GTPase activities. In Mycobacterium ulcerans (strain Agy99), this protein is Nucleotide-binding protein MUL_1815.